An 84-amino-acid polypeptide reads, in one-letter code: Large ribosomal subunit protein eL34 (84 aa).

This sequence belongs to the eukaryotic ribosomal protein eL34 family.

This is Large ribosomal subunit protein eL34 from Pyrobaculum calidifontis (strain DSM 21063 / JCM 11548 / VA1).